The primary structure comprises 442 residues: MSLTLRKLDSADAGFAAQLRQVLAFEASEDEAIDRAAAQILADVKVRGDAAVLETTLRFDRVEADSVAALELSPVVLQAALDGLEPTRRAALEAAAARVRAYHEKQKIECGTHSWEYAEADGTVLGQKVTPLDRVGIYVPGGKAAYPSSVLMNAIPARVAGVKEIIMVVPTPGGVRNELVLAAACIAGVDRVFTIGGAQAVGALAYGTETVPAVDKIVGPGNAYVAAAKRRVFGTVGIDMIAGPSEILVICDGTTDPDWVAMDLFSQAEHDELAQSILLCPDAGFIAQVEASIRRQLDDMPRKEVIAASLSGRGALIQVRDMDEACEIANDIAPEHLEISAENPRQWAERIRHAGAIFLGKYTSESLGDYCAGPNHVLPTSRTARFSSPLGVYDFIKRSSLIEVSEAGAQMLGEIASELAYGEGLQAHARSAEYRLQRTTTE.

Residues Tyr-138, Gln-199, and Asn-222 each coordinate NAD(+). Residues Ser-245, Gln-267, and His-270 each contribute to the substrate site. Residues Gln-267 and His-270 each contribute to the Zn(2+) site. Catalysis depends on proton acceptor residues Glu-335 and His-336. 4 residues coordinate substrate: His-336, Asp-369, Glu-423, and His-428. Residue Asp-369 participates in Zn(2+) binding. His-428 contributes to the Zn(2+) binding site.

The protein belongs to the histidinol dehydrogenase family. The cofactor is Zn(2+).

The enzyme catalyses L-histidinol + 2 NAD(+) + H2O = L-histidine + 2 NADH + 3 H(+). Its pathway is amino-acid biosynthesis; L-histidine biosynthesis; L-histidine from 5-phospho-alpha-D-ribose 1-diphosphate: step 9/9. In terms of biological role, catalyzes the sequential NAD-dependent oxidations of L-histidinol to L-histidinaldehyde and then to L-histidine. In Ralstonia nicotianae (strain ATCC BAA-1114 / GMI1000) (Ralstonia solanacearum), this protein is Histidinol dehydrogenase.